The following is a 2144-amino-acid chain: Reducing polyketide synthase PKS2 (2144 aa).

In terms of domain architecture, Ketosynthase family 3 (KS3) spans 10 to 436; sequence PMPLAIIGMS…GSNSHCIVRA (427 aa). Catalysis depends on for beta-ketoacyl synthase activity residues C183, H319, and H360. A malonyl-CoA:ACP transacylase (MAT) region spans residues 538-855; it reads VFAFTGQGAQ…VPSLHRGQNA (318 aa). The interval 924 to 1058 is N-terminal hotdog fold; it reads HDLLGSINSS…ALVKCEATTD (135 aa). The dehydratase (DH) domain stretch occupies residues 924–1214; that stretch reads HDLLGSINSS…RSYSIDGTTD (291 aa). A PKS/mFAS DH domain is found at 924 to 1237; that stretch reads HDLLGSINSS…LAVEATLAPQ (314 aa). Residues 1076 to 1237 form a C-terminal hotdog fold region; sequence HSCVGSPLLY…LAVEATLAPQ (162 aa). The interval 1461–1747 is enoyl reductase (ER) domain; that stretch reads GMPDSLYLQR…SETDSKKLLL (287 aa). The segment at 1771-1948 is ketoreductase (KR) domain; sequence AVYLLVGGSG…PATSLALTAV (178 aa). The 78-residue stretch at 2059–2136 folds into the Carrier domain; sequence EATQLLLAAI…KIVDSVIVKR (78 aa). Residue S2096 is modified to O-(pantetheine 4'-phosphoryl)serine.

It participates in mycotoxin biosynthesis. Functionally, reducing polyketide synthase (PKS); part of the Tox1A locus, one of the 2 loci that mediate the biosynthesis of T-toxin, a family of linear polyketides 37 to 45 carbons in length, of which the major component is 41 carbons, and which leads to high virulence to maize. One of the PKSs (PKS1 or PKS2) could synthesize a precursor, used subsequently by the other PKS as starter unit, to add additional carbons. Variability in the length of the final carbon backbone C35-47 could be achieved by varying the number of condensation cycles, or use of different starter or extender units or might be due to decarboxylation of the penultimate product, catalyzed by DEC1. Additional proteins are required for the biosynthesis of T-toxin, including oxidoreductases RED1, RED2, RED3, LAM1 and OXI1, as well as esterase TOX9. The chain is Reducing polyketide synthase PKS2 from Cochliobolus heterostrophus (strain C4 / ATCC 48331 / race T) (Southern corn leaf blight fungus).